A 528-amino-acid chain; its full sequence is GMP synthase [glutamine-hydrolyzing] (528 aa).

The Glutamine amidotransferase type-1 domain occupies 13–203 (TVLVVDFGAQ…LYEAAGCRPT (191 aa)). C90 functions as the Nucleophile in the catalytic mechanism. Residues H177 and E179 contribute to the active site. Positions 204–402 (WTMVNIVEDQ…LGLPAEMVWR (199 aa)) constitute a GMPS ATP-PPase domain. Residue 231–237 (SGGVDSA) coordinates ATP.

Homodimer.

It catalyses the reaction XMP + L-glutamine + ATP + H2O = GMP + L-glutamate + AMP + diphosphate + 2 H(+). It participates in purine metabolism; GMP biosynthesis; GMP from XMP (L-Gln route): step 1/1. Catalyzes the synthesis of GMP from XMP. The polypeptide is GMP synthase [glutamine-hydrolyzing] (Thermobifida fusca (strain YX)).